Here is a 239-residue protein sequence, read N- to C-terminus: Protein GrpE (239 aa).

2 disordered regions span residues 1-53 (MIEE…EDLK) and 210-239 (GPGQ…SEEN). Basic and acidic residues-rich tracts occupy residues 34–53 (NEDK…EDLK) and 219–230 (SEEKDKVDKDID).

It belongs to the GrpE family. In terms of assembly, homodimer.

It is found in the cytoplasm. Participates actively in the response to hyperosmotic and heat shock by preventing the aggregation of stress-denatured proteins, in association with DnaK and GrpE. It is the nucleotide exchange factor for DnaK and may function as a thermosensor. Unfolded proteins bind initially to DnaJ; upon interaction with the DnaJ-bound protein, DnaK hydrolyzes its bound ATP, resulting in the formation of a stable complex. GrpE releases ADP from DnaK; ATP binding to DnaK triggers the release of the substrate protein, thus completing the reaction cycle. Several rounds of ATP-dependent interactions between DnaJ, DnaK and GrpE are required for fully efficient folding. This chain is Protein GrpE, found in Prochlorococcus marinus (strain MIT 9515).